Here is a 526-residue protein sequence, read N- to C-terminus: GMP synthase [glutamine-hydrolyzing] (526 aa).

Positions 4–204 constitute a Glutamine amidotransferase type-1 domain; it reads KIVVLDFGSQ…AHAICGCSGD (201 aa). The active-site Nucleophile is the cysteine 87. Catalysis depends on residues histidine 178 and glutamate 180. Positions 205-401 constitute a GMPS ATP-PPase domain; sequence WTPASFVEEQ…LDVPDPIVGR (197 aa). ATP is bound at residue 232–238; the sequence is SGGVDSS.

Homodimer.

It catalyses the reaction XMP + L-glutamine + ATP + H2O = GMP + L-glutamate + AMP + diphosphate + 2 H(+). It functions in the pathway purine metabolism; GMP biosynthesis; GMP from XMP (L-Gln route): step 1/1. Functionally, catalyzes the synthesis of GMP from XMP. The sequence is that of GMP synthase [glutamine-hydrolyzing] from Salinibacter ruber (strain DSM 13855 / M31).